The sequence spans 25 residues: Ocellatin-1 (25 aa).

At valine 25 the chain carries Valine amide.

As to expression, expressed by the skin dorsal glands.

The protein resides in the secreted. Has hemolytic activity against human erythrocytes and antibacterial activity against the Gram-negative bacterium E.coli. The chain is Ocellatin-1 from Leptodactylus ocellatus (Argus frog).